The following is a 433-amino-acid chain: Dihydrolipoyllysine-residue acetyltransferase component of pyruvate dehydrogenase complex (433 aa).

One can recognise a Lipoyl-binding domain in the interval 2 to 77 (AFEFRLPDIG…VVGDVIVKID (76 aa)). Lys43 is modified (N6-lipoyllysine). 2 disordered regions span residues 80 to 134 (DAEE…PSVR) and 164 to 204 (YLNG…FPET). 2 stretches are compositionally biased toward basic and acidic residues: residues 84 to 103 (MQFK…KEQE) and 117 to 126 (EKTEVDESKT). The Peripheral subunit-binding (PSBD) domain maps to 128 to 165 (KAMPSVRKYARENGVNIKAVNGSGKNGRITKEDIDAYL). A compositionally biased stretch (low complexity) spans 166–188 (NGGSSEEGSNTSVASESTSSDVV). Residue His404 is part of the active site.

The protein belongs to the 2-oxoacid dehydrogenase family. In terms of assembly, forms a 24-polypeptide structural core with octahedral symmetry. It depends on (R)-lipoate as a cofactor.

The catalysed reaction is N(6)-[(R)-dihydrolipoyl]-L-lysyl-[protein] + acetyl-CoA = N(6)-[(R)-S(8)-acetyldihydrolipoyl]-L-lysyl-[protein] + CoA. Functionally, the pyruvate dehydrogenase complex catalyzes the overall conversion of pyruvate to acetyl-CoA and CO(2). It contains multiple copies of three enzymatic components: pyruvate dehydrogenase (E1), dihydrolipoamide acetyltransferase (E2) and lipoamide dehydrogenase (E3). This is Dihydrolipoyllysine-residue acetyltransferase component of pyruvate dehydrogenase complex (pdhC) from Staphylococcus epidermidis (strain ATCC 12228 / FDA PCI 1200).